The primary structure comprises 271 residues: MANYSAADVKRLRELTGAGMMDCKKALEATEGDFDKAVENLRIKGAKDVGKRAERATAEGLVAADNGVLVELNSETDFVAKNDEFIELANKVVAAVKAAGARDLEGALAASLDGKTVGEVVQELSAKIGEKLELRRVATFDGKVATYLHRRSADLPPAVGVLVEYTGDSEEAARGAAMQVAALKPKYLNRDEVPADIVADERRIAEETARAEGKPEKALEKIVEGRLNGFYKDNVLLDQPSVQDSKKTVKALLDEAGVTVTGFARFEVGQA.

The tract at residues threonine 76 to valine 79 is involved in Mg(2+) ion dislocation from EF-Tu.

The protein belongs to the EF-Ts family.

The protein localises to the cytoplasm. Functionally, associates with the EF-Tu.GDP complex and induces the exchange of GDP to GTP. It remains bound to the aminoacyl-tRNA.EF-Tu.GTP complex up to the GTP hydrolysis stage on the ribosome. This chain is Elongation factor Ts, found in Saccharopolyspora erythraea (strain ATCC 11635 / DSM 40517 / JCM 4748 / NBRC 13426 / NCIMB 8594 / NRRL 2338).